We begin with the raw amino-acid sequence, 159 residues long: Ribosomal RNA large subunit methyltransferase H (159 aa).

S-adenosyl-L-methionine is bound by residues glycine 108 and 127–132 (FSKMTF).

Belongs to the RNA methyltransferase RlmH family. As to quaternary structure, homodimer.

It is found in the cytoplasm. It catalyses the reaction pseudouridine(1915) in 23S rRNA + S-adenosyl-L-methionine = N(3)-methylpseudouridine(1915) in 23S rRNA + S-adenosyl-L-homocysteine + H(+). Functionally, specifically methylates the pseudouridine at position 1915 (m3Psi1915) in 23S rRNA. In Clostridium perfringens (strain ATCC 13124 / DSM 756 / JCM 1290 / NCIMB 6125 / NCTC 8237 / Type A), this protein is Ribosomal RNA large subunit methyltransferase H.